Consider the following 385-residue polypeptide: UPF0496 protein At3g28290 (385 aa).

Residues Lys-138–Lys-214 adopt a coiled-coil conformation. The next 2 helical transmembrane spans lie at Ile-217 to Leu-237 and Val-242 to Val-262. Positions Ile-267–Lys-294 form a coiled coil.

The protein belongs to the UPF0496 family. As to expression, widely expressed.

The protein resides in the membrane. This is UPF0496 protein At3g28290 from Arabidopsis thaliana (Mouse-ear cress).